The sequence spans 361 residues: Zygote arrest protein 1 (361 aa).

2 disordered regions span residues 68 to 129 (GPRP…PRSW) and 142 to 252 (GLSS…EQDK). Residues 116–128 (PRSPARAGRPPRS) are compositionally biased toward low complexity. Threonine 155 carries the phosphothreonine modification. Positions 238 to 252 (ASRDRASPQSTEQDK) are enriched in basic and acidic residues. The 3CxxC-type zinc-finger motif lies at 263 to 346 (KYGYYHCKDC…RQDLCGRCKD (84 aa)).

Belongs to the ZAR1 family. In terms of assembly, interacts with YBX2. Post-translationally, phosphorylation by CDK1 does not regulate formation of MARDO (mitochondria-associated ribonucleoprotein domain) membraneless compartment. In terms of processing, ubiquitinated and degradaded by the proteasome during oocyte meiotic maturation, leading to MARDO (mitochondria-associated ribonucleoprotein domain) membraneless compartment dissolution.

The protein resides in the cytoplasm. Its subcellular location is the cytoplasmic ribonucleoprotein granule. In terms of biological role, mRNA-binding protein that mediates formation of MARDO (mitochondria-associated ribonucleoprotein domain), a membraneless compartment that stores maternal mRNAs in oocytes. MARDO assembly around mitochondria is directed by an increase in mitochondrial membrane potential during oocyte growth. Promotes formation of MARDO phase-separated membraneless compartment by undergoing liquid-liquid phase separation upon binding to maternal mRNAs. Binds to the 3'-UTR of maternal mRNAs. Maternal mRNAs stored in the MARDO are translationally repressed. Essential for female fertility and oocyte-to-embryo transition by coordinating maternal mRNA storage, translation and degradation. The sequence is that of Zygote arrest protein 1 from Rattus norvegicus (Rat).